The chain runs to 689 residues: Glycine--tRNA ligase beta subunit (689 aa).

Belongs to the class-II aminoacyl-tRNA synthetase family. As to quaternary structure, tetramer of two alpha and two beta subunits.

It localises to the cytoplasm. The enzyme catalyses tRNA(Gly) + glycine + ATP = glycyl-tRNA(Gly) + AMP + diphosphate. This Pectobacterium atrosepticum (strain SCRI 1043 / ATCC BAA-672) (Erwinia carotovora subsp. atroseptica) protein is Glycine--tRNA ligase beta subunit.